The following is a 277-amino-acid chain: Undecaprenyl-diphosphatase (277 aa).

7 helical membrane passes run Y3–F23, L48–F68, I97–I117, L125–L145, S198–I218, I227–I247, and L257–I277.

It belongs to the UppP family.

The protein localises to the cell membrane. It catalyses the reaction di-trans,octa-cis-undecaprenyl diphosphate + H2O = di-trans,octa-cis-undecaprenyl phosphate + phosphate + H(+). Functionally, catalyzes the dephosphorylation of undecaprenyl diphosphate (UPP). Confers resistance to bacitracin. This chain is Undecaprenyl-diphosphatase, found in Acholeplasma laidlawii (strain PG-8A).